Reading from the N-terminus, the 356-residue chain is MAKENVCIVYGGKSAEHDVSILTAQNVLNAIDKEQYQIDIIYITNDGAWKKKENIVDTINDIDSLRLIDVEAGEISKLLSQGSTGNAYSAVFPLLHGPNGEDGTIQGLFEVLDIPYVGNGVLAASSSMDKLVMKQLFAHRGLPQLPYVSFLRSEYHKYEGNILKLVHDKLEYPVFVKPANLGSSVGISKCNNEEELKNGIEEAFQFDRKLVIEQGIEAREIEVAVLGNDYPETTWPGEVIKEVAFYDYKAKYKDGKIKLDIPADLDEEVQMTLRNMAVEAFKATDCAGLLRADFFVTDDNQIFINETNAMPGFTAFSMYPSLWENMGVSYSDLIKKLIELAKEKHEDKKQNKYKID.

The 206-residue stretch at 134–339 (KQLFAHRGLP…YSDLIKKLIE (206 aa)) folds into the ATP-grasp domain. 167 to 222 (HDKLEYPVFVKPANLGSSVGISKCNNEEELKNGIEEAFQFDRKLVIEQGIEAREIE) serves as a coordination point for ATP. Residues D293, E306, and N308 each coordinate Mg(2+).

It belongs to the D-alanine--D-alanine ligase family. It depends on Mg(2+) as a cofactor. Requires Mn(2+) as cofactor.

The protein resides in the cytoplasm. The catalysed reaction is 2 D-alanine + ATP = D-alanyl-D-alanine + ADP + phosphate + H(+). It participates in cell wall biogenesis; peptidoglycan biosynthesis. Its function is as follows. Cell wall formation. This Staphylococcus saprophyticus subsp. saprophyticus (strain ATCC 15305 / DSM 20229 / NCIMB 8711 / NCTC 7292 / S-41) protein is D-alanine--D-alanine ligase.